A 472-amino-acid chain; its full sequence is Glutamyl-tRNA(Gln) amidotransferase subunit A (472 aa).

Catalysis depends on charge relay system residues K69 and S144. S168 (acyl-ester intermediate) is an active-site residue.

It belongs to the amidase family. GatA subfamily. Heterotrimer of A, B and C subunits.

The catalysed reaction is L-glutamyl-tRNA(Gln) + L-glutamine + ATP + H2O = L-glutaminyl-tRNA(Gln) + L-glutamate + ADP + phosphate + H(+). Its function is as follows. Allows the formation of correctly charged Gln-tRNA(Gln) through the transamidation of misacylated Glu-tRNA(Gln) in organisms which lack glutaminyl-tRNA synthetase. The reaction takes place in the presence of glutamine and ATP through an activated gamma-phospho-Glu-tRNA(Gln). The chain is Glutamyl-tRNA(Gln) amidotransferase subunit A from Sulfurisphaera tokodaii (strain DSM 16993 / JCM 10545 / NBRC 100140 / 7) (Sulfolobus tokodaii).